The chain runs to 858 residues: Respiratory burst oxidase homolog protein D (858 aa).

Positions 1–13 are enriched in basic and acidic residues; sequence MQNPEDHHSDREL. The tract at residues 1–27 is disordered; it reads MQNPEDHHSDRELSSPSNTTKSNDDKN. The Cytoplasmic segment spans residues 1 to 318; sequence MQNPEDHHSD…KYFLLDNWRR (318 aa). 2 EF-hand-like regions span residues 134-144 and 171-182; these read TATSDSLLPRA and RNITSGCISKEQ. EF-hand domains are found at residues 194–229 and 238–273; these read SFDS…SASA and QAAE…APIQ. The Ca(2+) site is built by D207, D209, D211, R213, and E218. Residues 319–339 traverse the membrane as a helical segment; it reads VWVLLLWIGVMAGLFAYKYVQ. The Extracellular portion of the chain corresponds to 340–351; sequence YKNKAAFNVMGH. A helical transmembrane segment spans residues 352-372; it reads CVCVAKGAAEVLKLNMALILL. Residues 357 to 514 enclose the Ferric oxidoreductase domain; the sequence is KGAAEVLKLN…LFVIVYSLLI (158 aa). The Cytoplasmic portion of the chain corresponds to 373 to 397; sequence PVCRNTITWLRNKTKLGGAVPFDDN. Residues 398-418 traverse the membrane as a helical segment; that stretch reads INFHKVVAGAIAVGVGIHVLA. The Extracellular portion of the chain corresponds to 419-454; it reads HMTCDFPRLLNASPEKYKPMEPYFGDQPRNYWHFVK. Residues 455–475 form a helical membrane-spanning segment; that stretch reads GVEGVSGIIMVVLMSIAFTLA. Topologically, residues 476-497 are cytoplasmic; that stretch reads SQRFRRNKIRLPRPLNKLTGFN. The chain crosses the membrane as a helical span at residues 498 to 518; sequence AFWYSHHLFVIVYSLLIVHGI. Over 519–675 the chain is Extracellular; it reads ELYLTKEWYK…APAQDYKEYE (157 aa). In terms of domain architecture, FAD-binding FR-type spans 548–670; it reads LRAFRSSVKD…DGPYGAPAQD (123 aa). Residues 676–696 traverse the membrane as a helical segment; it reads VLLLVGLGIGATPMISIVKDI. Residues 697–858 lie on the Cytoplasmic side of the membrane; it reads VNNMKEEKYD…TKFDFHKENF (162 aa).

The protein belongs to the RBOH (TC 5.B.1.3) family. As to quaternary structure, monomer and homodimer. Post-translationally, phosphorylated by CPK. Expressed in leaves.

Its subcellular location is the membrane. Calcium-dependent NADPH oxidase that generates superoxide. May be responsible for the oxidative burst in response to pathogen attack in the leaves. The protein is Respiratory burst oxidase homolog protein D (RBOHD) of Solanum tuberosum (Potato).